Reading from the N-terminus, the 342-residue chain is Nucleoid-associated protein SO_2177 (342 aa).

This sequence belongs to the YejK family.

The protein resides in the cytoplasm. The protein localises to the nucleoid. The protein is Nucleoid-associated protein SO_2177 of Shewanella oneidensis (strain ATCC 700550 / JCM 31522 / CIP 106686 / LMG 19005 / NCIMB 14063 / MR-1).